Reading from the N-terminus, the 21-residue chain is Protopolybiakinin-1 (21 aa).

The span at 1-11 shows a compositional bias: basic residues; the sequence is DKNKKPIRVGG. Residues 1–21 are disordered; the sequence is DKNKKPIRVGGRRPPGFTPFR.

It belongs to the bradykinin-related peptide family. As to expression, expressed by the venom gland.

The protein resides in the secreted. Functionally, causes constriction of the isolated rat ileum muscles (is 13-fold less potent than bradykinin (BK)), as well as degranulation of mast cells (is 7-fold more potent than BK). In vivo, causes algesic effects. Muscle constriction and algesic effects are partially mediated by bradykinin receptors B2 (BDKRB2). This chain is Protopolybiakinin-1, found in Protopolybia exigua (Neotropical social wasp).